The following is a 366-amino-acid chain: Nucleoporin SEH1 (366 aa).

WD repeat units lie at residues 18-57, 63-104, 111-152, 161-209, 226-267, and 290-329; these read AHRDLIHCVSFDPHGRRMATCASDMTMAIWDRQPDGNWRR, CHGG…TEKD, QWIR…RIYE, RWNL…VIYE, DMPC…TAIL, and GDQRKAWRIRYNLIGSVITSTSLDGTLRSWKSLFVNQWVK.

It belongs to the WD repeat SEC13 family. As to quaternary structure, component of the nuclear pore complex (NPC). Probably part of the GATOR complex.

It localises to the nucleus. Its subcellular location is the nuclear pore complex. The protein localises to the lysosome membrane. In terms of biological role, probable component of the nuclear pore complex (NPC) which is involved in the trafficking of macromolecules between the cytoplasm and nucleus. Its function is as follows. As a component of the GATOR complex may function in the amino acid-sensing branch of the TORC1 signaling pathway. The sequence is that of Nucleoporin SEH1 from Caenorhabditis briggsae.